We begin with the raw amino-acid sequence, 1354 residues long: Rho-associated protein kinase 1 (1354 aa).

Position 2 is an N-acetylserine (Ser-2). Positions 76 to 338 constitute a Protein kinase domain; sequence YEVVKVIGRG…VEEIKRHLFF (263 aa). Residues 82-90 and Lys-105 each bind ATP; that span reads IGRGAFGEV. The Proton acceptor role is filled by Asp-198. One can recognise an AGC-kinase C-terminal domain in the interval 341 to 409; sequence DQWAWETLRD…YSNRRYLSSA (69 aa). The tract at residues 368-727 is interaction with FHOD1; the sequence is FDDLEEDKGE…KKLKEEREAR (360 aa). A coiled-coil region spans residues 422-692; it reads KSLQESLQKT…RLEQEVNEHK (271 aa). The 78-residue stretch at 479–556 folds into the REM-1 domain; the sequence is STVSQIEKEK…LEEANDLLRT (78 aa). Lys-647 is modified (N6-acetyllysine). An SHROOM3 binding region spans residues 707 to 946; the sequence is EAKSVAMCEM…TVSRLEEANS (240 aa). Residues 949–1015 form the RhoBD domain; it reads TKDIEILRRE…LAEIMNRKDF (67 aa). The tract at residues 998–1010 is RHOA binding; that stretch reads LKTQAVNKLAEIM. The stretch at 1011-1102 forms a coiled coil; it reads NRKDFKIDRK…KLLDLSDSTS (92 aa). Residues Ser-1105 and Ser-1108 each carry the phosphoserine modification. Positions 1115–1354 are auto-inhibitory; it reads NLPESRIEGW…VVKNTSGKTS (240 aa). In terms of domain architecture, PH spans 1118-1317; it reads ESRIEGWLSV…WVTHLVKKIP (200 aa). The Phorbol-ester/DAG-type zinc-finger motif lies at 1228 to 1281; that stretch reads GHEFIPTLYHFPANCDACAKPLWHVFKPPPALECRRCHVKCHRDHLDKKEDLIC. Residues 1320–1354 form a disordered region; the sequence is PPSGFVRASPRTLSTRSTANQSFRKVVKNTSGKTS. Residue Ser-1328 is modified to Phosphoserine. The segment covering 1330–1354 has biased composition (polar residues); that stretch reads RTLSTRSTANQSFRKVVKNTSGKTS.

Belongs to the protein kinase superfamily. AGC Ser/Thr protein kinase family. As to quaternary structure, homodimer. Interacts with RHOB, RHOC, MYLC2B and PTEN. Interacts with ITGB1BP1 (via N-terminus and PTB domain). Interacts with RHOA (activated by GTP), CHORDC1, DAPK3, GEM, JIP3, RHOE, PPP1R12A, PFN1, LIMK1, LIMK2 and TSG101. Interacts with FHOD1 in a Src-dependent manner. Interacts with SHROOM3. Mg(2+) serves as cofactor. Autophosphorylated on serine and threonine residues. In terms of processing, cleaved by caspase-3 during apoptosis. This leads to constitutive activation of the kinase and membrane blebbing. In terms of tissue distribution, detected in blood platelets.

It localises to the cytoplasm. Its subcellular location is the cytoskeleton. The protein localises to the microtubule organizing center. It is found in the centrosome. The protein resides in the centriole. It localises to the golgi apparatus membrane. Its subcellular location is the cell projection. The protein localises to the bleb. It is found in the cell membrane. The protein resides in the lamellipodium. It localises to the ruffle. It catalyses the reaction L-seryl-[protein] + ATP = O-phospho-L-seryl-[protein] + ADP + H(+). The catalysed reaction is L-threonyl-[protein] + ATP = O-phospho-L-threonyl-[protein] + ADP + H(+). With respect to regulation, activated by RHOA binding. Inhibited by Y-27632. Functionally, protein kinase which is a key regulator of the actin cytoskeleton and cell polarity. Involved in regulation of smooth muscle contraction, actin cytoskeleton organization, stress fiber and focal adhesion formation, neurite retraction, cell adhesion and motility via phosphorylation of DAPK3, GFAP, LIMK1, LIMK2, MYL9/MLC2, TPPP, PFN1 and PPP1R12A. Phosphorylates FHOD1 and acts synergistically with it to promote SRC-dependent non-apoptotic plasma membrane blebbing. Phosphorylates JIP3 and regulates the recruitment of JNK to JIP3 upon UVB-induced stress. Acts as a suppressor of inflammatory cell migration by regulating PTEN phosphorylation and stability. Acts as a negative regulator of VEGF-induced angiogenic endothelial cell activation. Required for centrosome positioning and centrosome-dependent exit from mitosis. Plays a role in terminal erythroid differentiation. Inhibits podocyte motility via regulation of actin cytoskeletal dynamics and phosphorylation of CFL1. Promotes keratinocyte terminal differentiation. Involved in osteoblast compaction through the fibronectin fibrillogenesis cell-mediated matrix assembly process, essential for osteoblast mineralization. May regulate closure of the eyelids and ventral body wall by inducing the assembly of actomyosin bundles. The protein is Rho-associated protein kinase 1 (ROCK1) of Homo sapiens (Human).